The primary structure comprises 349 residues: UDP-N-acetylenolpyruvoylglucosamine reductase (349 aa).

The FAD-binding PCMH-type domain maps to 25-197; that stretch reads GIDARARYAA…VSVTFRLPKR (173 aa). Arg173 is an active-site residue. Catalysis depends on Ser249, which acts as the Proton donor. Glu345 is a catalytic residue.

The protein belongs to the MurB family. It depends on FAD as a cofactor.

The protein localises to the cytoplasm. The catalysed reaction is UDP-N-acetyl-alpha-D-muramate + NADP(+) = UDP-N-acetyl-3-O-(1-carboxyvinyl)-alpha-D-glucosamine + NADPH + H(+). The protein operates within cell wall biogenesis; peptidoglycan biosynthesis. Cell wall formation. This chain is UDP-N-acetylenolpyruvoylglucosamine reductase, found in Burkholderia multivorans (strain ATCC 17616 / 249).